The following is a 323-amino-acid chain: UDP-glucuronate 4-epimerase (323 aa).

11-13 (GFI) is a binding site for NAD(+). Catalysis depends on tyrosine 152, which acts as the Proton acceptor. Lysine 156 contacts NAD(+).

It belongs to the NAD(P)-dependent epimerase/dehydratase family. The cofactor is NAD(+).

The enzyme catalyses UDP-alpha-D-glucuronate = UDP-alpha-D-galacturonate. Catalyzes the interconversion of UDP-D-glucuronic acid (UDP-GlcA) and UDP-D-galacturonic acid (UDP-GalA). This Thermodesulfobacterium geofontis (strain OPF15) protein is UDP-glucuronate 4-epimerase.